Consider the following 449-residue polypeptide: UDP-N-acetylmuramate--L-alanine ligase (449 aa).

113 to 119 (GSHGKTT) serves as a coordination point for ATP.

Belongs to the MurCDEF family.

Its subcellular location is the cytoplasm. The catalysed reaction is UDP-N-acetyl-alpha-D-muramate + L-alanine + ATP = UDP-N-acetyl-alpha-D-muramoyl-L-alanine + ADP + phosphate + H(+). It functions in the pathway cell wall biogenesis; peptidoglycan biosynthesis. Functionally, cell wall formation. This chain is UDP-N-acetylmuramate--L-alanine ligase, found in Hydrogenobaculum sp. (strain Y04AAS1).